The primary structure comprises 587 residues: Protein IQ-DOMAIN 31 (587 aa).

Residues 57–80 (ETNTVDRSGGMLETQNVGPEEISD) are disordered. S79 carries the post-translational modification Phosphoserine. 3 IQ domains span residues 112-140 (REIA…GIIR), 141-163 (LQAL…SVMG), and 164-188 (IVRL…VYRK). Residues 149 to 159 (LVRRQAVATLF) form a calmodulin-binding region. The short motif at 176–183 (IRKSDIGV) is the Nuclear localization signal element. The disordered stretch occupies residues 344 to 587 (NPVVESSIQP…AKTTPAERKR (244 aa)). Basic and acidic residues-rich tracts occupy residues 357 to 373 (PRKE…KTRE) and 390 to 413 (CDEK…EMEV). The segment covering 424–434 (ALDSSLVNQID) has biased composition (polar residues). Basic and acidic residues-rich tracts occupy residues 435 to 472 (SNEK…ENQK) and 482 to 494 (KTER…HHET). 2 stretches are compositionally biased toward polar residues: residues 495 to 506 (SPSIPSYMQATK) and 544 to 561 (RITS…SGDK).

It belongs to the IQD family. In terms of assembly, binds to multiple calmodulin (CaM) in the presence of Ca(2+) and CaM-like proteins.

It localises to the nucleus. It is found in the nucleus envelope. The protein resides in the cytoplasm. The protein localises to the cytoskeleton. Its subcellular location is the cell membrane. Functionally, may be involved in cooperative interactions with calmodulins or calmodulin-like proteins. Recruits calmodulin proteins to microtubules, thus being a potential scaffold in cellular signaling and trafficking. May associate with nucleic acids and regulate gene expression at the transcriptional or post-transcriptional level. This is Protein IQ-DOMAIN 31 from Arabidopsis thaliana (Mouse-ear cress).